A 484-amino-acid polypeptide reads, in one-letter code: Aldehyde dehydrogenase family 3 member A2 (484 aa).

Over 1-463 (MERQVLRLRQ…FLLKQFNKGR (463 aa)) the chain is Cytoplasmic. 185 to 190 (GNTAVG) serves as a coordination point for NAD(+). Active-site residues include Glu207 and Cys241. Ser293 bears the Phosphoserine mark. Residues 464-484 (LGMLLFVCLVAVAAVIVKDQL) traverse the membrane as a helical segment. The Prevents secretion from ER signature appears at 481–484 (KDQL).

It belongs to the aldehyde dehydrogenase family. As to quaternary structure, homodimer.

It localises to the membrane. Its subcellular location is the microsome membrane. The protein resides in the endoplasmic reticulum membrane. The catalysed reaction is an aldehyde + NAD(+) + H2O = a carboxylate + NADH + 2 H(+). The enzyme catalyses a fatty aldehyde + NAD(+) + H2O = a fatty acid + NADH + 2 H(+). It catalyses the reaction hexadecanoate + NADH + 2 H(+) = hexadecanal + NAD(+) + H2O. It carries out the reaction octanal + NAD(+) + H2O = octanoate + NADH + 2 H(+). The catalysed reaction is (2E)-hexadecenal + NAD(+) + H2O = (E)-hexadec-2-enoate + NADH + 2 H(+). The enzyme catalyses 22-oxodocosanoate + NAD(+) + H2O = docosanedioate + NADH + 2 H(+). It catalyses the reaction 2,6,10,14-tetramethylpentadecanal + NAD(+) + H2O = 2,6,10,14-tetramethylpentadecanoate + NADH + 2 H(+). It carries out the reaction octadecanal + NAD(+) + H2O = octadecanoate + NADH + 2 H(+). The catalysed reaction is dodecanoate + NADH + 2 H(+) = dodecanal + NAD(+) + H2O. The enzyme catalyses decanal + NAD(+) + H2O = decanoate + NADH + 2 H(+). It catalyses the reaction tetradecanal + NAD(+) + H2O = tetradecanoate + NADH + 2 H(+). It carries out the reaction heptanal + NAD(+) + H2O = heptanoate + NADH + 2 H(+). The catalysed reaction is (2E,6E)-farnesal + NAD(+) + H2O = (2E,6E)-farnesoate + NADH + 2 H(+). In terms of biological role, catalyzes the oxidation of medium and long-chain aliphatic aldehydes to fatty acids. Active on a variety of saturated and unsaturated aliphatic aldehydes between 6 and 24 carbons in length. Responsible for conversion of the sphingosine 1-phosphate (S1P) degradation product hexadecenal to hexadecenoic acid. The polypeptide is Aldehyde dehydrogenase family 3 member A2 (Aldh3a2) (Mus musculus (Mouse)).